The sequence spans 225 residues: Cytidylate kinase (225 aa).

11 to 19 (GPAGAGKST) contributes to the ATP binding site.

This sequence belongs to the cytidylate kinase family. Type 1 subfamily.

Its subcellular location is the cytoplasm. The catalysed reaction is CMP + ATP = CDP + ADP. The enzyme catalyses dCMP + ATP = dCDP + ADP. This chain is Cytidylate kinase, found in Shouchella clausii (strain KSM-K16) (Alkalihalobacillus clausii).